The primary structure comprises 412 residues: Multifunctional CCA protein (412 aa).

ATP is bound by residues Gly8 and Arg11. Residues Gly8 and Arg11 each coordinate CTP. Residues Asp21 and Asp23 each contribute to the Mg(2+) site. ATP-binding residues include Arg91, Arg137, and Arg140. Residues Arg91, Arg137, and Arg140 each contribute to the CTP site. The 102-residue stretch at 226 to 327 folds into the HD domain; sequence TGIHTMMVID…VTLFEKTDAL (102 aa).

It belongs to the tRNA nucleotidyltransferase/poly(A) polymerase family. Bacterial CCA-adding enzyme type 1 subfamily. As to quaternary structure, monomer. Can also form homodimers and oligomers. The cofactor is Mg(2+). It depends on Ni(2+) as a cofactor.

It carries out the reaction a tRNA precursor + 2 CTP + ATP = a tRNA with a 3' CCA end + 3 diphosphate. The enzyme catalyses a tRNA with a 3' CCA end + 2 CTP + ATP = a tRNA with a 3' CCACCA end + 3 diphosphate. Functionally, catalyzes the addition and repair of the essential 3'-terminal CCA sequence in tRNAs without using a nucleic acid template. Adds these three nucleotides in the order of C, C, and A to the tRNA nucleotide-73, using CTP and ATP as substrates and producing inorganic pyrophosphate. tRNA 3'-terminal CCA addition is required both for tRNA processing and repair. Also involved in tRNA surveillance by mediating tandem CCA addition to generate a CCACCA at the 3' terminus of unstable tRNAs. While stable tRNAs receive only 3'-terminal CCA, unstable tRNAs are marked with CCACCA and rapidly degraded. The sequence is that of Multifunctional CCA protein from Dechloromonas aromatica (strain RCB).